A 3625-amino-acid polypeptide reads, in one-letter code: Cubilin (3625 aa).

Residues methionine 1–alanine 20 form the signal peptide. Residues glutamate 21–arginine 36 constitute a propeptide, removed in mature form. The tract at residues proline 43 to glycine 50 is interaction with AMN. An N-linked (GlcNAc...) asparagine glycan is attached at asparagine 106. The EGF-like 1 domain maps to aspartate 133–serine 169. Disulfide bonds link cysteine 137–cysteine 148, cysteine 142–cysteine 157, cysteine 159–cysteine 168, cysteine 175–cysteine 191, cysteine 185–cysteine 200, and cysteine 202–cysteine 211. In terms of domain architecture, EGF-like 2; calcium-binding spans aspartate 171–alanine 212. The N-linked (GlcNAc...) asparagine glycan is linked to asparagine 257. In terms of domain architecture, EGF-like 3; calcium-binding spans aspartate 264–glutamate 305. 20 cysteine pairs are disulfide-bonded: cysteine 268–cysteine 281, cysteine 275–cysteine 290, cysteine 293–cysteine 304, cysteine 310–cysteine 325, cysteine 317–cysteine 334, cysteine 337–cysteine 348, cysteine 354–cysteine 367, cysteine 361–cysteine 377, cysteine 379–cysteine 393, cysteine 400–cysteine 410, cysteine 405–cysteine 419, cysteine 421–cysteine 430, cysteine 437–cysteine 448, cysteine 442–cysteine 457, cysteine 459–cysteine 468, cysteine 475–cysteine 501, cysteine 528–cysteine 550, cysteine 591–cysteine 617, cysteine 644–cysteine 666, and cysteine 709–cysteine 734. The 44-residue stretch at aspartate 306 to threonine 349 folds into the EGF-like 4; calcium-binding domain. EGF-like domains follow at residues leucine 350–valine 394 and leucine 396–threonine 431. Asparagine 429 is a glycosylation site (N-linked (GlcNAc...) asparagine). Positions asparagine 433–histidine 469 constitute an EGF-like 7; calcium-binding domain. 27 consecutive CUB domains span residues cysteine 475–arginine 587, cysteine 591–threonine 703, cysteine 709–alanine 816, cysteine 817–glutamate 928, cysteine 932–threonine 1042, serine 1045–serine 1163, cysteine 1167–threonine 1279, cysteine 1280–histidine 1391, cysteine 1393–valine 1508, cysteine 1512–alanine 1621, cysteine 1622–serine 1736, cysteine 1740–isoleucine 1852, glycine 1854–methionine 1965, cysteine 1980–serine 2093, cysteine 2094–lysine 2215, cysteine 2219–alanine 2336, cysteine 2338–serine 2450, cysteine 2454–serine 2567, cysteine 2572–threonine 2689, cysteine 2691–glutamate 2803, cysteine 2807–arginine 2921, cysteine 2922–threonine 3037, cysteine 3039–threonine 3152, cysteine 3159–leucine 3276, cysteine 3280–cysteine 3397, cysteine 3397–serine 3509, and cysteine 3513–serine 3625. Asparagine 712 and asparagine 749 each carry an N-linked (GlcNAc...) asparagine glycan. A disulfide bridge links cysteine 761 with cysteine 779. Asparagine 781 carries N-linked (GlcNAc...) asparagine glycosylation. A disulfide bond links cysteine 817 and cysteine 842. N-linked (GlcNAc...) asparagine glycosylation occurs at asparagine 857. Intrachain disulfides connect cysteine 869–cysteine 891 and cysteine 932–cysteine 958. N-linked (GlcNAc...) asparagine glycosylation is present at asparagine 957. Position 980 (glutamate 980) interacts with Ca(2+). An N-linked (GlcNAc...) asparagine glycan is attached at asparagine 984. An intrachain disulfide couples cysteine 985 to cysteine 1005. Residues aspartate 988, aspartate 1027, aspartate 1029, and leucine 1030 each contribute to the Ca(2+) site. The N-linked (GlcNAc...) asparagine glycan is linked to asparagine 1048. Ca(2+) contacts are provided by glutamate 1097, aspartate 1107, and aspartate 1148. Cysteine 1104 and cysteine 1126 are oxidised to a cystine. Residues cysteine 1167 and cysteine 1193 are joined by a disulfide bond. Asparagine 1170 carries N-linked (GlcNAc...) asparagine glycosylation. Glutamate 1215 contacts Ca(2+). N-linked (GlcNAc...) asparagine glycosylation is present at asparagine 1219. The cysteines at positions 1220 and 1242 are disulfide-linked. 4 residues coordinate Ca(2+): aspartate 1223, aspartate 1264, glycine 1266, and glutamine 1267. A disulfide bond links cysteine 1280 and cysteine 1308. Asparagine 1287, asparagine 1309, and asparagine 1321 each carry an N-linked (GlcNAc...) asparagine glycan. Ca(2+) is bound at residue glutamate 1330. Asparagine 1334 carries an N-linked (GlcNAc...) asparagine glycan. Cysteine 1335 and cysteine 1353 are joined by a disulfide. Residues aspartate 1338, aspartate 1375, and valine 1377 each coordinate Ca(2+). 2 cysteine pairs are disulfide-bonded: cysteine 1393/cysteine 1419 and cysteine 1446/cysteine 1468. Asparagine 1502 is a glycosylation site (N-linked (GlcNAc...) asparagine). The cysteines at positions 1512 and 1538 are disulfide-linked. N-linked (GlcNAc...) asparagine glycosylation occurs at asparagine 1553. 5 disulfides stabilise this stretch: cysteine 1565/cysteine 1583, cysteine 1622/cysteine 1649, cysteine 1677/cysteine 1699, cysteine 1740/cysteine 1766, and cysteine 1793/cysteine 1814. The N-linked (GlcNAc...) asparagine glycan is linked to asparagine 1648. 3 N-linked (GlcNAc...) asparagine glycosylation sites follow: asparagine 1804, asparagine 1821, and asparagine 1887. 3 disulfides stabilise this stretch: cysteine 1907–cysteine 1929, cysteine 1980–cysteine 2008, and cysteine 2034–cysteine 2056. N-linked (GlcNAc...) asparagine glycosylation is found at asparagine 2087 and asparagine 2119. Cystine bridges form between cysteine 2094/cysteine 2120 and cysteine 2219/cysteine 2249. N-linked (GlcNAc...) asparagine glycosylation is present at asparagine 2276. Disulfide bonds link cysteine 2277-cysteine 2299 and cysteine 2338-cysteine 2365. Residues asparagine 2388 and asparagine 2402 are each glycosylated (N-linked (GlcNAc...) asparagine). 3 disulfides stabilise this stretch: cysteine 2392–cysteine 2413, cysteine 2454–cysteine 2480, and cysteine 2507–cysteine 2529. Residues asparagine 2533, asparagine 2583, asparagine 2594, and asparagine 2612 are each glycosylated (N-linked (GlcNAc...) asparagine). Cysteines 2572 and 2601 form a disulfide. 5 disulfide bridges follow: cysteine 2630/cysteine 2651, cysteine 2691/cysteine 2717, cysteine 2744/cysteine 2766, cysteine 2807/cysteine 2833, and cysteine 2862/cysteine 2885. N-linked (GlcNAc...) asparagine glycans are attached at residues asparagine 2887, asparagine 2925, asparagine 2928, and asparagine 2947. Cystine bridges form between cysteine 2922-cysteine 2948 and cysteine 2979-cysteine 3001. The residue at position 3010 (threonine 3010) is a Phosphothreonine. 2 disulfides stabilise this stretch: cysteine 3039/cysteine 3066 and cysteine 3093/cysteine 3115. Residues asparagine 3044, asparagine 3105, and asparagine 3127 are each glycosylated (N-linked (GlcNAc...) asparagine). 2 cysteine pairs are disulfide-bonded: cysteine 3159/cysteine 3187 and cysteine 3217/cysteine 3239. Residues asparagine 3270 and asparagine 3285 are each glycosylated (N-linked (GlcNAc...) asparagine). 2 cysteine pairs are disulfide-bonded: cysteine 3280/cysteine 3308 and cysteine 3334/cysteine 3356. Asparagine 3359 carries an N-linked (GlcNAc...) asparagine glycan. A disulfide bond links cysteine 3397 and cysteine 3423. N-linked (GlcNAc...) asparagine glycans are attached at residues asparagine 3432, asparagine 3459, and asparagine 3535. 3 disulfide bridges follow: cysteine 3450–cysteine 3472, cysteine 3513–cysteine 3539, and cysteine 3566–cysteine 3588.

In terms of assembly, interacts with AMN. Component of the cubam complex composed of one CUBN trimer and one AMN chain. The cubam complex can dimerize. Interacts with LRP2 in a dual-receptor complex in a calcium-dependent manner. Found in a complex with PID1/PCLI1, LRP1 and CUBNI. Interacts with LRP1 and PID1/PCLI1. The precursor is cleaved by a trans-Golgi proteinase furin, removing a propeptide. Post-translationally, N-glycosylated. As to expression, detected in kidney cortex (at protein level).

The protein localises to the apical cell membrane. The protein resides in the cell membrane. It is found in the membrane. Its subcellular location is the coated pit. It localises to the endosome. The protein localises to the lysosome membrane. Endocytic receptor which plays a role in lipoprotein, vitamin and iron metabolism by facilitating their uptake. Acts together with LRP2 to mediate endocytosis of high-density lipoproteins, GC, hemoglobin, ALB, TF and SCGB1A1. Acts together with AMN to mediate endocytosis of the CBLIF-cobalamin complex. Binds to ALB, MB, Kappa and lambda-light chains, TF, hemoglobin, GC, SCGB1A1, APOA1, high density lipoprotein, and the CBLIF-cobalamin complex. Ligand binding requires calcium. Serves as important transporter in several absorptive epithelia, including intestine, renal proximal tubules and embryonic yolk sac. May play an important role in the development of the peri-implantation embryo through internalization of APOA1 and cholesterol. Binds to LGALS3 at the maternal-fetal interface. The sequence is that of Cubilin (CUBN) from Sus scrofa (Pig).